Here is a 709-residue protein sequence, read N- to C-terminus: Phosphoribosylformylglycinamidine synthase subunit PurL (709 aa).

The active site involves histidine 36. ATP is bound by residues tyrosine 39 and lysine 80. A Mg(2+)-binding site is contributed by glutamate 82. Substrate contacts are provided by residues 83-86 (SHNH) and arginine 105. Histidine 84 (proton acceptor) is an active-site residue. Mg(2+) is bound at residue aspartate 106. A substrate-binding site is contributed by glutamine 226. Aspartate 252 provides a ligand contact to Mg(2+). 294–296 (ETQ) provides a ligand contact to substrate. ATP is bound by residues aspartate 470 and glycine 507. Serine 510 lines the substrate pocket.

The protein belongs to the FGAMS family. As to quaternary structure, monomer. Part of the FGAM synthase complex composed of 1 PurL, 1 PurQ and 2 PurS subunits.

It is found in the cytoplasm. It catalyses the reaction N(2)-formyl-N(1)-(5-phospho-beta-D-ribosyl)glycinamide + L-glutamine + ATP + H2O = 2-formamido-N(1)-(5-O-phospho-beta-D-ribosyl)acetamidine + L-glutamate + ADP + phosphate + H(+). Its pathway is purine metabolism; IMP biosynthesis via de novo pathway; 5-amino-1-(5-phospho-D-ribosyl)imidazole from N(2)-formyl-N(1)-(5-phospho-D-ribosyl)glycinamide: step 1/2. Its function is as follows. Part of the phosphoribosylformylglycinamidine synthase complex involved in the purines biosynthetic pathway. Catalyzes the ATP-dependent conversion of formylglycinamide ribonucleotide (FGAR) and glutamine to yield formylglycinamidine ribonucleotide (FGAM) and glutamate. The FGAM synthase complex is composed of three subunits. PurQ produces an ammonia molecule by converting glutamine to glutamate. PurL transfers the ammonia molecule to FGAR to form FGAM in an ATP-dependent manner. PurS interacts with PurQ and PurL and is thought to assist in the transfer of the ammonia molecule from PurQ to PurL. The protein is Phosphoribosylformylglycinamidine synthase subunit PurL of Saccharolobus islandicus (strain M.14.25 / Kamchatka #1) (Sulfolobus islandicus).